The sequence spans 139 residues: MHEWALADGIVRTALDYAQREGAKKLLAIQVVLGELQDVNAEIVEFAMKELLKGTIGEGAEIEFIEEEAVFKCRDCGHEWKLKEVKGSFDERIKEDIHFIPEVVHAFLACPKCGSRDFEVVQGRGVYISGIKIEKEGEA.

His-2 provides a ligand contact to Ni(2+). Residues Cys-73, Cys-76, Cys-110, and Cys-113 each contribute to the Zn(2+) site.

The protein belongs to the HypA/HybF family.

Its function is as follows. Involved in the maturation of [NiFe] hydrogenases. Required for nickel insertion into the metal center of the hydrogenase. The protein is Hydrogenase maturation factor HypA of Thermococcus onnurineus (strain NA1).